The sequence spans 425 residues: Tol-Pal system protein TolB (425 aa).

A signal peptide spans Met1–Ala22.

This sequence belongs to the TolB family. The Tol-Pal system is composed of five core proteins: the inner membrane proteins TolA, TolQ and TolR, the periplasmic protein TolB and the outer membrane protein Pal. They form a network linking the inner and outer membranes and the peptidoglycan layer.

Its subcellular location is the periplasm. Part of the Tol-Pal system, which plays a role in outer membrane invagination during cell division and is important for maintaining outer membrane integrity. This chain is Tol-Pal system protein TolB, found in Nitrosomonas europaea (strain ATCC 19718 / CIP 103999 / KCTC 2705 / NBRC 14298).